A 1590-amino-acid polypeptide reads, in one-letter code: Pentafunctional AROM polypeptide (1590 aa).

Positions 1-400 (MSTANGSSPT…HEPKASSVDD (400 aa)) are 3-dehydroquinate synthase. NAD(+) is bound by residues 49-51 (DTN), 96-99 (EGSK), 127-129 (GGV), and aspartate 132. Arginine 143 provides a ligand contact to 7-phospho-2-dehydro-3-deoxy-D-arabino-heptonate. 152–153 (TT) provides a ligand contact to NAD(+). 7-phospho-2-dehydro-3-deoxy-D-arabino-heptonate contacts are provided by aspartate 159 and lysine 165. Lysine 174 serves as a coordination point for NAD(+). Residue asparagine 175 participates in 7-phospho-2-dehydro-3-deoxy-D-arabino-heptonate binding. Residues 192 to 195 (FLNT) and asparagine 203 each bind NAD(+). Position 207 (glutamate 207) interacts with Zn(2+). 7-phospho-2-dehydro-3-deoxy-D-arabino-heptonate-binding positions include 207-210 (EVIK) and lysine 266. Residue glutamate 276 is the Proton acceptor; for 3-dehydroquinate synthase activity of the active site. Residues 280 to 284 (RNLLN) and histidine 287 each bind 7-phospho-2-dehydro-3-deoxy-D-arabino-heptonate. Histidine 287 is a Zn(2+) binding site. Histidine 291 functions as the Proton acceptor; for 3-dehydroquinate synthase activity in the catalytic mechanism. Positions 303 and 372 each coordinate 7-phospho-2-dehydro-3-deoxy-D-arabino-heptonate. A Zn(2+)-binding site is contributed by histidine 303. The segment at 413–856 (VQPGVRPGLK…WDVLSGVFGV (444 aa)) is EPSP synthase. Cysteine 838 functions as the For EPSP synthase activity in the catalytic mechanism. The segment at 876–1070 (NRSVFVIGMR…KAKPHSFFVS (195 aa)) is shikimate kinase. 883-890 (GMRGAGKS) is a binding site for ATP. The tract at residues 1071 to 1285 (LTVPNITAHT…AAPGQLTAAE (215 aa)) is 3-dehydroquinase. Histidine 1187 functions as the Proton acceptor; for 3-dehydroquinate dehydratase activity in the catalytic mechanism. Lysine 1215 functions as the Schiff-base intermediate with substrate; for 3-dehydroquinate dehydratase activity in the catalytic mechanism. A shikimate dehydrogenase region spans residues 1298-1590 (KRKFYLFGKP…IVMNGTSDSS (293 aa)).

This sequence in the N-terminal section; belongs to the sugar phosphate cyclases superfamily. Dehydroquinate synthase family. It in the 2nd section; belongs to the EPSP synthase family. In the 3rd section; belongs to the shikimate kinase family. The protein in the 4th section; belongs to the type-I 3-dehydroquinase family. This sequence in the C-terminal section; belongs to the shikimate dehydrogenase family. As to quaternary structure, homodimer. Zn(2+) serves as cofactor.

The protein resides in the cytoplasm. It carries out the reaction 7-phospho-2-dehydro-3-deoxy-D-arabino-heptonate = 3-dehydroquinate + phosphate. The catalysed reaction is 3-dehydroquinate = 3-dehydroshikimate + H2O. It catalyses the reaction shikimate + NADP(+) = 3-dehydroshikimate + NADPH + H(+). The enzyme catalyses shikimate + ATP = 3-phosphoshikimate + ADP + H(+). It carries out the reaction 3-phosphoshikimate + phosphoenolpyruvate = 5-O-(1-carboxyvinyl)-3-phosphoshikimate + phosphate. Its pathway is metabolic intermediate biosynthesis; chorismate biosynthesis; chorismate from D-erythrose 4-phosphate and phosphoenolpyruvate: step 2/7. It functions in the pathway metabolic intermediate biosynthesis; chorismate biosynthesis; chorismate from D-erythrose 4-phosphate and phosphoenolpyruvate: step 3/7. It participates in metabolic intermediate biosynthesis; chorismate biosynthesis; chorismate from D-erythrose 4-phosphate and phosphoenolpyruvate: step 4/7. The protein operates within metabolic intermediate biosynthesis; chorismate biosynthesis; chorismate from D-erythrose 4-phosphate and phosphoenolpyruvate: step 5/7. Its pathway is metabolic intermediate biosynthesis; chorismate biosynthesis; chorismate from D-erythrose 4-phosphate and phosphoenolpyruvate: step 6/7. Functionally, the AROM polypeptide catalyzes 5 consecutive enzymatic reactions in prechorismate polyaromatic amino acid biosynthesis. In Pyricularia oryzae (strain 70-15 / ATCC MYA-4617 / FGSC 8958) (Rice blast fungus), this protein is Pentafunctional AROM polypeptide.